The primary structure comprises 150 residues: Putative HTH-type transcriptional regulator rrf2-like (150 aa).

The HTH rrf2-type domain maps to 1-139; sequence MITQKMKYAL…DSLTLEDMLA (139 aa).

This is Putative HTH-type transcriptional regulator rrf2-like from Rhodobacter capsulatus (strain ATCC BAA-309 / NBRC 16581 / SB1003).